Here is a 132-residue protein sequence, read N- to C-terminus: Small ribosomal subunit protein uS11 (132 aa).

It belongs to the universal ribosomal protein uS11 family. Part of the 30S ribosomal subunit.

In terms of biological role, located on the platform of the 30S subunit. The chain is Small ribosomal subunit protein uS11 (rps11) from Korarchaeum cryptofilum (strain OPF8).